The sequence spans 3159 residues: MHHGTGPQNVQHQLQRSRACPGSEGEEQPAHPNPPPSPAAPFAPSASPSAPQSPSYQIQQLMNRSPATGQNVNITLQSVGPVVGGNQQITLAPLPLPSPTSPGFQFSAQPRRFEHGSPSYIQVTSPLSQQVQTQSPTQPSPGPGQALQNVRAGAPGPGLGLCSSSPTGGFVDASVLVRQISLSPSSGGHFVFQDGSGLTQIAQGAQVQLQHPGTPITVRERRPSQPHTQSGGTIHHLGPQSPAAAGGAGLQPLASPSHITTANLPPQISSIIQGQLVQQQQVLQGPPLPRPLGFERTPGVLLPGAGGAAGFGMTSPPPPTSPSRTAVPPGLSSLPLTSVGNTGMKKVPKKLEEIPPASPEMAQMRKQCLDYHYQEMQALKEVFKEYLIELFFLQHFQGNMMDFLAFKKKHYAPLQAYLRQNDLDIEEEEEEEEEEEEKSEVINDEVKVVTGKDGQTGTPVAIATQLPPKVSAAFSSQQQPFQQALAGSLVAGAGSTVETDLFKRQQAMPSTGMAEQSKRPRLEVGHQGVVFQHPGADAGVPLQQLMPTAQGGMPPTPQAAQLAGQRQSQQQYDPSTGPPVQNAASLHTPLPQLPGRLPPAGVPTAALSSALQFAQQPQVVEAQTQLQIPVKTQQPNVPIPAPPSSQLPIPPSQPAQLALHVPTPGKVQVQASQLSSLPQMVASTRLPVDPAPPCPRPLPTSSTSSLAPVSGSGPGPSPARSSPVNRPSSATNKALSPVTSRTPGVVASAPTKPQSPAQNATSSQDSSQDTLTEQITLENQVHQRIAELRKAGLWSQRRLPKLQEAPRPKSHWDYLLEEMQWMATDFAQERRWKVAAAKKLVRTVVRHHEEKQLREERGKKEEQSRLRRIAASTAREIECFWSNIEQVVEIKLRVELEEKRKKALNLQKVSRRGKELRPKGFDALQESSLDSGMSGRKRKASISLTDDEVDDEEETIEEEEANEGVVDHQTELSNLAKEAELPLLDLMKLYEGAFLPSSQWPRPKPDGEDTSGEEDADDCPGDRESRKDLVLIDSLFIMDQFKAAERMNIGKPNAKDIADVTAVAEAILPKGSARVTTSVKFNAPSLLYGALRDYQKIGLDWLAKLYRKNLNGILADEAGLGKTVQIIAFFAHLACNEGNWGPHLVVVRSCNILKWELELKRWCPGLKILSYIGSHRELKAKRQEWAEPNSFHVCITSYTQFFRGLTAFTRVRWKCLVIDEMQRVKGMTERHWEAVFTLQSQQRLLLIDSPLHNTFLELWTMVHFLVPGISRPYLSSPLRAPSEESQDYYHKVVIRLHRVTQPFILRRTKRDVEKQLTKKYEHVLKCRLSNRQKALYEDVILQPGTQEALKSGHFVNVLSILVRLQRICNHPGLVEPRHPGSSYVAGPLEYPSASLILKALERDFWKEADLSMFDLIGLENKITRHEAELLSKKKIPRKLMEEISTSAAPAARPAAAKLKASRLFQPVQYGQKPEGRTVAFPSTHPPRTAAPTTASAAPQGPLRGRPPIATFSANPEAKAAAAPFQTSQASASAPRHQPASASSTAASPAHPAKLRAQTTAQASTPGQPPPQPQAPSHAAGQSALPQRLVLPSQAQARLPSGEVVKIAQLASITGPQSRVAQPETPVTLQFQGSKFTLSHSQLRQLTAGQPLQLQGSVLQIVSAPGQPYLRAPGPVVMQTVSQAGAVHGALGSKPPAGGPSPAPLTPQVGVPGRVAVNALAVGEPGTASKPASPIGGPTQEEKTRLLKERLDQIYLVNERRCSQAPVYGRDLLRICALPSHGRVQWRGSLDGRRGKEAGPAHSYTSSSESPSELMLTLCRCGESLQDVIDRVAFVIPPVVAAPPSLRVPRPPPLYSHRMRILRQGLREHAAPYFQQLRQTTAPRLLQFPELRLVQFDSGKLEALAILLQKLKSEGRRVLILSQMILMLDILEMFLNFHYLTYVRIDENASSEQRQELMRSFNRDRRIFCAILSTHSRTTGINLVEADTVVFYDNDLNPVMDAKAQEWCDRIGRCKDIHIYRLVSGNSIEEKLLKNGTKDLIREVAAQGNDYSMAFLTQRTIQELFEVYSPMDDAGFPVKAEEFVVLSQEPSVTETIAPKIARPFIEALKSIEYLEEDAQKSAQEGVLGPHTDALSSDSENMPCDEEPSQLEELADFMEQLTPIEKYALNYLELFHTSIEQEKERNSEDAVMTAVRAWEFWNLKTLQEREARLRLEQEEAELLTYTREDAYSMEYVYEDVDGQTEVMPLWTPPTPPQDDSDIYLDSVMCLMYEATPIPEAKLPPVYVRKERKRHKTDPSAAGRKKKQRHGEAVVPPRSLFDRATPGLLKIRREGKEQKKNILLKQQVPFAKPLPTFAKPTAEPGQDNPEWLISEDWALLQAVKQLLELPLNLTIVSPAHTPNWDLVSDVVNSCSRIYRSSKQCRNRYENVIIPREEGKSKNNRPLRTSQIYAQDENATHTQLYTSHFDLMKMTAGKRSPPIKPLLGMNPFQKNPKHASVLAESGINYDKPLPPIQVASLRAERIAKEKKALADQQKAQQPAVAQPPPPQPQPPPPPQQPPPPLPQPQAAGSQPPAGPPAVQPQPQPQPQTQPQPVQAPAKAQPAITTGGSAAVLAGTIKTSVTGTSMPTGAVSGNVIVNTIAGVPAATFQSINKRLASPVAPGALTTPGGSAPAQVVHTQPPPRAVGSPATATPDLVSMATTQGVRAVTSVTASAVVTTNLTPVQTPARSLVPQVSQATGVQLPGKTITPAHFQLLRQQQQQQQQQQQQQQQQQQQQQQQQQQQQQTTTTSQVQVPQIQGQAQSPAQIKAVGKLTPEHLIKMQKQKLQMPPQPPPPQAQSAPPQPTAQVQVQTSQPPQQQSPQLTTVTAPRPGALLTGTTVANLQVARLTRVPTSQLQAQGQMQTQAPQPAQVALAKPPVVSVPAAVVSSPGVTTLPMNVAGISVAIGQPQKAAGQTVVAQPVHMQQLLKLKQQAVQQQKAIQPQAAQGPAAVQQKITAQQITTPGAQQKVAYAAQPALKTQFLTTPISQAQKLAGAQQVQTQIQVAKLPQVVQQQTPVASIQQVASASQQASPQTVALTQATAAGQQVQMIPAVTATAQVVQQKLIQQQVVTTASAPLQTPGAPNPAQVPASSDSPSQQPKLQMRVPAVRLKTPTKPPCQ.

Residues 1 to 16 (MHHGTGPQNVQHQLQR) are compositionally biased toward polar residues. Disordered regions lie at residues 1–65 (MHHG…MNRS), 125–154 (SPLS…RAGA), 212–261 (PGTP…HITT), 282–359 (VLQG…PASP), 545–594 (LMPT…PQLP), 633–658 (QQPN…AQLA), and 684–770 (TRLP…SQDT). A compositionally biased stretch (pro residues) spans 31-41 (HPNPPPSPAAP). Positions 42–55 (FAPSASPSAPQSPS) are enriched in low complexity. Position 53 is a phosphoserine (Ser-53). Over residues 56–65 (YQIQQLMNRS) the composition is skewed to polar residues. 2 stretches are compositionally biased toward low complexity: residues 125-137 (SPLS…QSPT) and 237-256 (LGPQ…LASP). Ser-135 is modified (phosphoserine). A phosphoserine mark is found at Ser-315 and Ser-321. Residues 558–571 (QAAQLAGQRQSQQQ) show a composition bias toward low complexity. The span at 572 to 585 (YDPSTGPPVQNAAS) shows a compositional bias: polar residues. Pro residues-rich tracts occupy residues 637-653 (VPIP…PPSQ) and 689-698 (DPAPPCPRPL). The segment covering 699-711 (PTSSTSSLAPVSG) has biased composition (low complexity). 2 stretches are compositionally biased toward polar residues: residues 725-742 (NRPS…TSRT) and 751-760 (TKPQSPAQNA). 2 positions are modified to phosphoserine: Ser-736 and Ser-755. Over residues 761–770 (TSSQDSSQDT) the composition is skewed to low complexity. The 73-residue stretch at 799–871 (LPKLQEAPRP…EQSRLRRIAA (73 aa)) folds into the HSA domain. Disordered regions lie at residues 915-967 (ELRP…GVVD) and 997-1024 (SSQW…GDRE). Phosphoserine is present on residues Ser-928 and Ser-941. A Phosphothreonine modification is found at Thr-945. Acidic residues-rich tracts occupy residues 945 to 962 (TDDE…EEAN) and 1008 to 1019 (EDTSGEEDADDC). The interval 951 to 1365 (DEEETIEEEE…NVLSILVRLQ (415 aa)) is interactions with RUVBL1 and RUVBL2. Ser-1011 carries the post-translational modification Phosphoserine. The 166-residue stretch at 1103–1268 (AKLYRKNLNG…WTMVHFLVPG (166 aa)) folds into the Helicase ATP-binding domain. 1116-1123 (DEAGLGKT) serves as a coordination point for ATP. A DEAH box-like motif is present at residues 1219–1222 (DEMQ). The tract at residues 1467–1582 (VQYGQKPEGR…QAPSHAAGQS (116 aa)) is disordered. At Lys-1472 the chain carries N6-acetyllysine. Low complexity-rich tracts occupy residues 1481–1498 (PSTH…SAAP) and 1538–1565 (PASA…ASTP). Ser-1547, Ser-1728, and Ser-1732 each carry phosphoserine. The tract at residues 1787 to 1807 (GSLDGRRGKEAGPAHSYTSSS) is disordered. A compositionally biased stretch (basic and acidic residues) spans 1789-1798 (LDGRRGKEAG). Residues 1899–2056 (KLEALAILLQ…GNDYSMAFLT (158 aa)) form the Helicase C-terminal domain. 2 disordered regions span residues 2119 to 2144 (KSAQ…PCDE) and 2287 to 2311 (KERK…GEAV). Residues Lys-2349 and Lys-2356 each carry the N6-acetyllysine modification. Positions 2360-2429 (EPGQDNPEWL…QCRNRYENVI (70 aa)) constitute a Myb-like domain. Disordered stretches follow at residues 2524–2602 (KEKK…AQPA) and 2665–2688 (TPGG…GSPA). Residues 2524 to 2789 (KEKKALADQQ…QQQQQTTTTS (266 aa)) are interaction with ZNF42. The segment covering 2530 to 2540 (ADQQKAQQPAV) has biased composition (low complexity). Pro residues-rich tracts occupy residues 2541–2563 (AQPP…PLPQ) and 2572–2589 (PAGP…PQTQ). Residues 2590–2602 (PQPVQAPAKAQPA) show a composition bias toward low complexity. Ser-2686 carries the phosphoserine modification. Thr-2813 bears the Phosphothreonine mark. Disordered stretches follow at residues 2821–2869 (QKQK…TAPR) and 3115–3159 (APLQ…PPCQ). Positions 2828–2843 (PPQPPPPQAQSAPPQP) are enriched in pro residues. A compositionally biased stretch (low complexity) spans 2844–2866 (TAQVQVQTSQPPQQQSPQLTTVT). A compositionally biased stretch (polar residues) spans 3129–3140 (PASSDSPSQQPK).

The protein belongs to the SNF2/RAD54 helicase family. SWR1 subfamily. Component of the NuA4 histone acetyltransferase complex which contains the catalytic subunit KAT5/TIP60 and the subunits EP400, TRRAP/PAF400, BRD8/SMAP, EPC1, DMAP1/DNMAP1, RUVBL1/TIP49, RUVBL2, ING3, actin, ACTL6A/BAF53A, MORF4L1/MRG15, MORF4L2/MRGX, MRGBP, YEATS4/GAS41, VPS72/YL1 and MEAF6. May also participate in the formation of NuA4 related complexes which lack the KAT5/TIP60 catalytic subunit, but which include the SWI/SNF related protein SRCAP. The NuA4 complex interacts with MYC and the adenovirus E1A protein. EP400 interacts with TRRAP, RUVBL1 and RUVBL2. Component of a SWR1-like complex. Interacts with ZNF42. Interacts with PHF5A. Interacts with human cytomegalovirus UL27. Interacts with human adenovirus 5 E1A protein; this interaction stabilizes MYC. In terms of tissue distribution, ubiquitously expressed.

It is found in the nucleus. Its function is as follows. Component of the NuA4 histone acetyltransferase complex which is involved in transcriptional activation of select genes principally by acetylation of nucleosomal histones H4 and H2A. This modification may both alter nucleosome - DNA interactions and promote interaction of the modified histones with other proteins which positively regulate transcription. May be required for transcriptional activation of E2F1 and MYC target genes during cellular proliferation. The NuA4 complex ATPase and helicase activities seem to be, at least in part, contributed by the association of RUVBL1 and RUVBL2 with EP400. May regulate ZNF42 transcription activity. Component of a SWR1-like complex that specifically mediates the removal of histone H2A.Z/H2AZ1 from the nucleosome. This Homo sapiens (Human) protein is E1A-binding protein p400 (EP400).